A 199-amino-acid polypeptide reads, in one-letter code: Crossover junction endodeoxyribonuclease RuvC (199 aa).

Catalysis depends on residues D7, E68, and D141. The Mg(2+) site is built by D7, E68, and D141.

It belongs to the RuvC family. Homodimer which binds Holliday junction (HJ) DNA. The HJ becomes 2-fold symmetrical on binding to RuvC with unstacked arms; it has a different conformation from HJ DNA in complex with RuvA. In the full resolvosome a probable DNA-RuvA(4)-RuvB(12)-RuvC(2) complex forms which resolves the HJ. Mg(2+) serves as cofactor.

It is found in the cytoplasm. The enzyme catalyses Endonucleolytic cleavage at a junction such as a reciprocal single-stranded crossover between two homologous DNA duplexes (Holliday junction).. Functionally, the RuvA-RuvB-RuvC complex processes Holliday junction (HJ) DNA during genetic recombination and DNA repair. Endonuclease that resolves HJ intermediates. Cleaves cruciform DNA by making single-stranded nicks across the HJ at symmetrical positions within the homologous arms, yielding a 5'-phosphate and a 3'-hydroxyl group; requires a central core of homology in the junction. The consensus cleavage sequence is 5'-(A/T)TT(C/G)-3'. Cleavage occurs on the 3'-side of the TT dinucleotide at the point of strand exchange. HJ branch migration catalyzed by RuvA-RuvB allows RuvC to scan DNA until it finds its consensus sequence, where it cleaves and resolves the cruciform DNA. The polypeptide is Crossover junction endodeoxyribonuclease RuvC (Saccharopolyspora erythraea (strain ATCC 11635 / DSM 40517 / JCM 4748 / NBRC 13426 / NCIMB 8594 / NRRL 2338)).